The following is a 576-amino-acid chain: Proline--tRNA ligase (576 aa).

This sequence belongs to the class-II aminoacyl-tRNA synthetase family. ProS type 1 subfamily. In terms of assembly, homodimer.

It localises to the cytoplasm. The catalysed reaction is tRNA(Pro) + L-proline + ATP = L-prolyl-tRNA(Pro) + AMP + diphosphate. Its function is as follows. Catalyzes the attachment of proline to tRNA(Pro) in a two-step reaction: proline is first activated by ATP to form Pro-AMP and then transferred to the acceptor end of tRNA(Pro). As ProRS can inadvertently accommodate and process non-cognate amino acids such as alanine and cysteine, to avoid such errors it has two additional distinct editing activities against alanine. One activity is designated as 'pretransfer' editing and involves the tRNA(Pro)-independent hydrolysis of activated Ala-AMP. The other activity is designated 'posttransfer' editing and involves deacylation of mischarged Ala-tRNA(Pro). The misacylated Cys-tRNA(Pro) is not edited by ProRS. The polypeptide is Proline--tRNA ligase (Bordetella pertussis (strain Tohama I / ATCC BAA-589 / NCTC 13251)).